Reading from the N-terminus, the 373-residue chain is Glutamate 5-kinase (373 aa).

Lys15 is an ATP binding site. Positions 55, 142, and 154 each coordinate substrate. ATP is bound by residues 174 to 175 (TD) and 216 to 222 (TGGMATK). One can recognise a PUA domain in the interval 281 to 359 (AGSIVVDAGA…SEIEGILGFR (79 aa)).

The protein belongs to the glutamate 5-kinase family.

It is found in the cytoplasm. It carries out the reaction L-glutamate + ATP = L-glutamyl 5-phosphate + ADP. Its pathway is amino-acid biosynthesis; L-proline biosynthesis; L-glutamate 5-semialdehyde from L-glutamate: step 1/2. In terms of biological role, catalyzes the transfer of a phosphate group to glutamate to form L-glutamate 5-phosphate. This Citrifermentans bemidjiense (strain ATCC BAA-1014 / DSM 16622 / JCM 12645 / Bem) (Geobacter bemidjiensis) protein is Glutamate 5-kinase.